Here is a 295-residue protein sequence, read N- to C-terminus: Acetylglutamate kinase (295 aa).

Substrate is bound by residues 66–67 (GG), Arg-88, and Asn-193.

Belongs to the acetylglutamate kinase family. ArgB subfamily.

The protein localises to the cytoplasm. It carries out the reaction N-acetyl-L-glutamate + ATP = N-acetyl-L-glutamyl 5-phosphate + ADP. It functions in the pathway amino-acid biosynthesis; L-arginine biosynthesis; N(2)-acetyl-L-ornithine from L-glutamate: step 2/4. Catalyzes the ATP-dependent phosphorylation of N-acetyl-L-glutamate. This Rhizobium johnstonii (strain DSM 114642 / LMG 32736 / 3841) (Rhizobium leguminosarum bv. viciae) protein is Acetylglutamate kinase.